Consider the following 321-residue polypeptide: Anthranilate phosphoribosyltransferase (321 aa).

5-phospho-alpha-D-ribose 1-diphosphate is bound by residues Gly72, 75–76 (GD), Thr80, 82–85 (NVST), 99–107 (KHGNVSITS), and Ser111. Gly72 lines the anthranilate pocket. Ser84 lines the Mg(2+) pocket. Asn102 contributes to the anthranilate binding site. Residue Arg157 coordinates anthranilate. Mg(2+) contacts are provided by Asp216 and Glu217.

This sequence belongs to the anthranilate phosphoribosyltransferase family. Homodimer. Mg(2+) serves as cofactor.

The catalysed reaction is N-(5-phospho-beta-D-ribosyl)anthranilate + diphosphate = 5-phospho-alpha-D-ribose 1-diphosphate + anthranilate. It functions in the pathway amino-acid biosynthesis; L-tryptophan biosynthesis; L-tryptophan from chorismate: step 2/5. In terms of biological role, catalyzes the transfer of the phosphoribosyl group of 5-phosphorylribose-1-pyrophosphate (PRPP) to anthranilate to yield N-(5'-phosphoribosyl)-anthranilate (PRA). In Methanococcus maripaludis (strain C7 / ATCC BAA-1331), this protein is Anthranilate phosphoribosyltransferase.